Consider the following 129-residue polypeptide: Small ribosomal subunit protein uS11 (129 aa).

It belongs to the universal ribosomal protein uS11 family. In terms of assembly, part of the 30S ribosomal subunit. Interacts with proteins S7 and S18. Binds to IF-3.

Functionally, located on the platform of the 30S subunit, it bridges several disparate RNA helices of the 16S rRNA. Forms part of the Shine-Dalgarno cleft in the 70S ribosome. This chain is Small ribosomal subunit protein uS11, found in Parvibaculum lavamentivorans (strain DS-1 / DSM 13023 / NCIMB 13966).